The sequence spans 242 residues: Ribosomal RNA small subunit methyltransferase G (242 aa).

S-adenosyl-L-methionine contacts are provided by residues Gly79, 130–131, and Gln149; that span reads VE.

The protein belongs to the methyltransferase superfamily. RNA methyltransferase RsmG family.

It is found in the cytoplasm. In terms of biological role, specifically methylates the N7 position of a guanine in 16S rRNA. The chain is Ribosomal RNA small subunit methyltransferase G from Mycoplasmoides gallisepticum (strain R(low / passage 15 / clone 2)) (Mycoplasma gallisepticum).